A 46-amino-acid chain; its full sequence is MSGKSWVLISTTSPQSLEDEILGRLLKILFVLFVDLMSIMYVVITS.

Topologically, residues 1-21 (MSGKSWVLISTTSPQSLEDEI) are cytoplasmic. Residues 22–42 (LGRLLKILFVLFVDLMSIMYV) form a helical membrane-spanning segment. Residues 43–46 (VITS) lie on the Lumenal side of the membrane.

Homooligomer. Monomer. Interacts with ATP2A1/SERCA1. Interacts as a monomer with ATP2A2/SERCA2; the interaction inhibits ATP2A2 activity. As to expression, specifically expressed in all skeletal muscles. Detected in both fast- and slow-type skeletal muscle. Not expressed in cardiac or smooth muscles.

Its subcellular location is the sarcoplasmic reticulum membrane. Its function is as follows. Inhibits the activity of ATP2A1/SERCA1 ATPase in sarcoplasmic reticulum by decreasing the apparent affinity of the ATPase for Ca(2+), thereby acting as a key regulator of skeletal muscle activity. Its high expression in adult skeletal muscle, suggests that it constitutes the predominant regulator of ATP2A1/SERCA1 in adult skeletal muscle. Also inhibits the activity of ATP2A2/SERCA2 and ATP2A3/SERCA3. In Mus musculus (Mouse), this protein is Myoregulin.